The chain runs to 58 residues: uncharacterized protein (58 aa).

Positions 3–52 form a coiled coil; that stretch reads KVILEHLQRIEKQLEILNSKIENFLGFEELSEEELKELDEIEAKMEKGEK.

This is an uncharacterized protein from Archaeoglobus fulgidus (strain ATCC 49558 / DSM 4304 / JCM 9628 / NBRC 100126 / VC-16).